We begin with the raw amino-acid sequence, 542 residues long: MEVDDGYVEYVPVEERLAQMKRKVVEEPGKGMMEHLSDKKKLMSVGELARGITYTEPLSTWWKPPLHVRKMSTKQMDLIRKQWHITVNGEDIPPPIKNFMDMKFPSPLLRMLKDKGIMHPTPIQVQGLPVVLSGRDMIGIAFTGSGKTLVFVLPMIILALQEEIMMPIAAGEGPIALVICPSRELAKQTYDVVEQFVASLVEDGYPRLRSLLCIGGVDMRSQLDVVKKGVHIVVATPGRLKDILAKKKMSLDACRLLTLDEADRLVDLGFEDDIRHVFDHFKSQRQTLLFSATMPAKIQIFATSALVKPVTVNVGRAGAANLDVIQEVEYVKQEAKIVYLLECLQKTTPPVLIFCENKADVDDIHEYLLLKGVEAVAIHGGKDQEDRDYAISLFKAGKKDVLVATDVASKGLDFPDIQHVINYDMPGEIENYVHRIGRTGRCGKTGIATTFINKNQSEITLLDLKHLLQEAKQRIPPVLAELNGPMEETETIANASGVKGCAYCGGLGHRILQCPKFEHQKSVAISSSRKDHFGSDGYRGEV.

The Q motif signature appears at 97–125; the sequence is KNFMDMKFPSPLLRMLKDKGIMHPTPIQV. Positions 128–312 constitute a Helicase ATP-binding domain; the sequence is LPVVLSGRDM…TSALVKPVTV (185 aa). 141 to 148 lines the ATP pocket; the sequence is AFTGSGKT. Residues 260–263 carry the DEAD box motif; that stretch reads DEAD. One can recognise a Helicase C-terminal domain in the interval 323–483; the sequence is DVIQEVEYVK…RIPPVLAELN (161 aa). The CCHC-type zinc finger occupies 499–516; the sequence is KGCAYCGGLGHRILQCPK.

The protein belongs to the DEAD box helicase family. DDX41 subfamily.

It catalyses the reaction ATP + H2O = ADP + phosphate + H(+). This is Putative DEAD-box ATP-dependent RNA helicase 43 (RH43) from Arabidopsis thaliana (Mouse-ear cress).